The sequence spans 214 residues: Tungstate uptake system ATP-binding protein TupC (214 aa).

Residues 3–214 (ITVSNLKKSY…GRVGEADGFF (212 aa)) form the ABC transporter domain. Residue 35–42 (GPNGAGKT) participates in ATP binding.

This sequence belongs to the ABC transporter superfamily. In terms of assembly, the complex is composed of two ATP-binding proteins (TupC), two transmembrane proteins (TupB) and a solute-binding protein (TupA).

The catalysed reaction is tungstate(in) + ATP + H2O = tungstate(out) + ADP + phosphate + H(+). Its function is as follows. Part of an ABC transporter complex involved in tungstate uptake. Probably responsible for energy coupling to the transport system. The polypeptide is Tungstate uptake system ATP-binding protein TupC (Peptoclostridium acidaminophilum (Eubacterium acidaminophilum)).